The sequence spans 514 residues: Alpha-amylase (514 aa).

The N-terminal stretch at 1 to 31 is a signal peptide; the sequence is MIQKRKRTVSFRLVLMCTLLFVSLPITKTSA. Asparagine 133, aspartate 190, alanine 212, aspartate 214, aspartate 225, aspartate 231, aspartate 233, and aspartate 235 together coordinate Ca(2+). Position 190 (aspartate 190) interacts with Na(+). The Na(+) site is built by aspartate 214, aspartate 225, and aspartate 231. The active-site Nucleophile is aspartate 262. Histidine 266 is a Ca(2+) binding site. The active-site Proton donor is the glutamate 292. Ca(2+)-binding residues include glycine 331, aspartate 438, and aspartate 461.

It belongs to the glycosyl hydrolase 13 family. Monomer. Requires Ca(2+) as cofactor. Na(+) is required as a cofactor.

Its subcellular location is the secreted. It catalyses the reaction Endohydrolysis of (1-&gt;4)-alpha-D-glucosidic linkages in polysaccharides containing three or more (1-&gt;4)-alpha-linked D-glucose units.. This chain is Alpha-amylase, found in Bacillus amyloliquefaciens (Bacillus velezensis).